The following is a 568-amino-acid chain: Proline--tRNA ligase (568 aa).

The protein belongs to the class-II aminoacyl-tRNA synthetase family. ProS type 1 subfamily. As to quaternary structure, homodimer.

The protein resides in the cytoplasm. It catalyses the reaction tRNA(Pro) + L-proline + ATP = L-prolyl-tRNA(Pro) + AMP + diphosphate. Its function is as follows. Catalyzes the attachment of proline to tRNA(Pro) in a two-step reaction: proline is first activated by ATP to form Pro-AMP and then transferred to the acceptor end of tRNA(Pro). As ProRS can inadvertently accommodate and process non-cognate amino acids such as alanine and cysteine, to avoid such errors it has two additional distinct editing activities against alanine. One activity is designated as 'pretransfer' editing and involves the tRNA(Pro)-independent hydrolysis of activated Ala-AMP. The other activity is designated 'posttransfer' editing and involves deacylation of mischarged Ala-tRNA(Pro). The misacylated Cys-tRNA(Pro) is not edited by ProRS. The protein is Proline--tRNA ligase of Macrococcus caseolyticus (strain JCSC5402) (Macrococcoides caseolyticum).